A 947-amino-acid polypeptide reads, in one-letter code: Protein translocase subunit SecA 1 (947 aa).

Residues Gln87, 105 to 109 (GEGKT), and Asp525 contribute to the ATP site. The segment at 907-937 (DDADKAARDPNRPETWGKVGRNEDCPCNSGK) is disordered. Residues 908-918 (DADKAARDPNR) show a composition bias toward basic and acidic residues. Zn(2+) contacts are provided by Cys931, Cys933, Cys942, and His943.

Belongs to the SecA family. As to quaternary structure, monomer and homodimer. Part of the essential Sec protein translocation apparatus which comprises SecA, SecYEG and auxiliary proteins SecDF-YajC and YidC. It depends on Zn(2+) as a cofactor.

It is found in the cell inner membrane. The protein resides in the cytoplasm. It catalyses the reaction ATP + H2O + cellular proteinSide 1 = ADP + phosphate + cellular proteinSide 2.. In terms of biological role, part of the Sec protein translocase complex. Interacts with the SecYEG preprotein conducting channel. Has a central role in coupling the hydrolysis of ATP to the transfer of proteins into and across the cell membrane, serving both as a receptor for the preprotein-SecB complex and as an ATP-driven molecular motor driving the stepwise translocation of polypeptide chains across the membrane. The polypeptide is Protein translocase subunit SecA 1 (Rhodopseudomonas palustris (strain BisA53)).